Here is a 410-residue protein sequence, read N- to C-terminus: Translation initiation factor 2 subunit gamma (410 aa).

A tr-type G domain is found at 6–203; it reads QSEVNIGMVG…AIQEFIPTPK (198 aa). The interval 15–22 is G1; the sequence is GHVDHGKT. Mg(2+)-binding residues include D18, T22, G43, and S45. Residue 18–23 coordinates GTP; it reads DHGKTS. Residues 43–47 are G2; that stretch reads GISIR. Residues C58, C61, C73, and C76 each contribute to the Zn(2+) site. A G3 region spans residues 90–93; that stretch reads DAPG. Residues 146 to 149 and 181 to 183 each bind GTP; these read NKID and SAH. Residues 146 to 149 are G4; sequence NKID. Residues 181–183 form a G5 region; sequence SAH.

This sequence belongs to the TRAFAC class translation factor GTPase superfamily. Classic translation factor GTPase family. EIF2G subfamily. Heterotrimer composed of an alpha, a beta and a gamma chain. The cofactor is Mg(2+).

It carries out the reaction GTP + H2O = GDP + phosphate + H(+). Its function is as follows. eIF-2 functions in the early steps of protein synthesis by forming a ternary complex with GTP and initiator tRNA. This chain is Translation initiation factor 2 subunit gamma, found in Methanococcus maripaludis (strain C6 / ATCC BAA-1332).